Consider the following 208-residue polypeptide: Sodium/potassium-transporting ATPase subunit beta-1-interacting protein 4 (208 aa).

Transmembrane regions (helical) follow at residues 35 to 55, 62 to 82, and 151 to 171; these read APILANFVHIIIVILGLFGTI, VMVYTLWAAVWVTWNVFIICF, and CLQILIALLGFVCGCQVVSVF.

The protein belongs to the NKAIN family. In terms of assembly, interacts with ATP1B1.

Its subcellular location is the cell membrane. The sequence is that of Sodium/potassium-transporting ATPase subunit beta-1-interacting protein 4 (NKAIN4) from Homo sapiens (Human).